We begin with the raw amino-acid sequence, 138 residues long: Putative membrane protein insertion efficiency factor (138 aa).

The disordered stretch occupies residues 71–138; that stretch reads YDPVPGTPEA…GTPSHTRGEN (68 aa). Basic and acidic residues predominate over residues 81-113; it reads RQWRELHPETARSKNEPIHDLTDDNPRDHEPAL. Over residues 123 to 138 the composition is skewed to polar residues; it reads PGSTHTGTPSHTRGEN.

The protein belongs to the UPF0161 family.

It is found in the cell membrane. Could be involved in insertion of integral membrane proteins into the membrane. The polypeptide is Putative membrane protein insertion efficiency factor (Cutibacterium acnes (strain DSM 16379 / KPA171202) (Propionibacterium acnes)).